Consider the following 353-residue polypeptide: UPF0283 membrane protein KPN78578_12740 (353 aa).

3 helical membrane passes run 70 to 90, 99 to 119, and 213 to 233; these read MVSA…VQWT, WIAL…VGSL, and ESTL…FIAW.

Belongs to the UPF0283 family.

Its subcellular location is the cell inner membrane. This is UPF0283 membrane protein KPN78578_12740 from Klebsiella pneumoniae subsp. pneumoniae (strain ATCC 700721 / MGH 78578).